A 400-amino-acid polypeptide reads, in one-letter code: Nicotinate phosphoribosyltransferase (400 aa).

His-220 carries the phosphohistidine; by autocatalysis modification.

The protein belongs to the NAPRTase family. Transiently phosphorylated on a His residue during the reaction cycle. Phosphorylation strongly increases the affinity for substrates and increases the rate of nicotinate D-ribonucleotide production. Dephosphorylation regenerates the low-affinity form of the enzyme, leading to product release.

It catalyses the reaction nicotinate + 5-phospho-alpha-D-ribose 1-diphosphate + ATP + H2O = nicotinate beta-D-ribonucleotide + ADP + phosphate + diphosphate. It functions in the pathway cofactor biosynthesis; NAD(+) biosynthesis; nicotinate D-ribonucleotide from nicotinate: step 1/1. Catalyzes the synthesis of beta-nicotinate D-ribonucleotide from nicotinate and 5-phospho-D-ribose 1-phosphate at the expense of ATP. This is Nicotinate phosphoribosyltransferase from Shigella dysenteriae serotype 1 (strain Sd197).